We begin with the raw amino-acid sequence, 132 residues long: ATP synthase epsilon chain (132 aa).

The protein belongs to the ATPase epsilon chain family. F-type ATPases have 2 components, CF(1) - the catalytic core - and CF(0) - the membrane proton channel. CF(1) has five subunits: alpha(3), beta(3), gamma(1), delta(1), epsilon(1). CF(0) has three main subunits: a, b and c.

Its subcellular location is the cell membrane. Its function is as follows. Produces ATP from ADP in the presence of a proton gradient across the membrane. In Bacillus caldotenax, this protein is ATP synthase epsilon chain (atpC).